Consider the following 412-residue polypeptide: Polyferredoxin protein MvhB (412 aa).

4Fe-4S ferredoxin-type domains follow at residues 2-29, 30-57, 67-96, 97-127, 138-166, 168-197, 207-236, 238-266, 276-305, 314-345, 357-386, and 385-412; these read IIVN…VTPE, DVIY…LEDL, GRIV…LDEG, KVKK…VEGI, EGPI…LDKV, GVIE…ISGR, KKFE…PRTS, LTVE…LEVE, EGLV…VVTK, EKVD…LVDM, KRVQ…LTDE, and DEKV…LSLK. [4Fe-4S] cluster contacts are provided by cysteine 9, cysteine 12, cysteine 15, and cysteine 19. Residues cysteine 76, cysteine 79, cysteine 82, cysteine 86, cysteine 107, cysteine 110, cysteine 113, cysteine 117, cysteine 146, cysteine 149, cysteine 152, cysteine 156, cysteine 177, cysteine 180, cysteine 183, cysteine 187, cysteine 216, cysteine 219, cysteine 222, cysteine 226, cysteine 246, cysteine 249, cysteine 252, and cysteine 256 each coordinate [4Fe-4S] cluster. Cysteine 325, cysteine 328, cysteine 331, cysteine 335, cysteine 366, cysteine 369, cysteine 372, cysteine 376, cysteine 394, cysteine 397, cysteine 400, and cysteine 404 together coordinate [4Fe-4S] cluster.

[4Fe-4S] cluster is required as a cofactor.

The sequence is that of Polyferredoxin protein MvhB (mvhB) from Methanothermobacter thermautotrophicus (strain ATCC 29096 / DSM 1053 / JCM 10044 / NBRC 100330 / Delta H) (Methanobacterium thermoautotrophicum).